A 156-amino-acid polypeptide reads, in one-letter code: Small ribosomal subunit protein uS7 (156 aa).

The protein belongs to the universal ribosomal protein uS7 family. As to quaternary structure, part of the 30S ribosomal subunit. Contacts proteins S9 and S11.

In terms of biological role, one of the primary rRNA binding proteins, it binds directly to 16S rRNA where it nucleates assembly of the head domain of the 30S subunit. Is located at the subunit interface close to the decoding center, probably blocks exit of the E-site tRNA. The protein is Small ribosomal subunit protein uS7 of Pseudomonas fluorescens (strain ATCC BAA-477 / NRRL B-23932 / Pf-5).